The primary structure comprises 301 residues: Quinolinate synthase (301 aa).

Residues His-21 and Ser-38 each contribute to the iminosuccinate site. A [4Fe-4S] cluster-binding site is contributed by Cys-83. Iminosuccinate contacts are provided by residues 109-111 (YIN) and Ser-126. Cys-169 is a [4Fe-4S] cluster binding site. Residues 195-197 (HPE) and Thr-212 contribute to the iminosuccinate site. Residue Cys-257 participates in [4Fe-4S] cluster binding.

The protein belongs to the quinolinate synthase family. Type 2 subfamily. [4Fe-4S] cluster serves as cofactor.

It is found in the cytoplasm. It catalyses the reaction iminosuccinate + dihydroxyacetone phosphate = quinolinate + phosphate + 2 H2O + H(+). It functions in the pathway cofactor biosynthesis; NAD(+) biosynthesis; quinolinate from iminoaspartate: step 1/1. Catalyzes the condensation of iminoaspartate with dihydroxyacetone phosphate to form quinolinate. This chain is Quinolinate synthase, found in Clostridium perfringens (strain 13 / Type A).